Reading from the N-terminus, the 365-residue chain is Cobalt-precorrin-5B C(1)-methyltransferase (365 aa).

The protein belongs to the CbiD family.

It catalyses the reaction Co-precorrin-5B + S-adenosyl-L-methionine = Co-precorrin-6A + S-adenosyl-L-homocysteine. Its pathway is cofactor biosynthesis; adenosylcobalamin biosynthesis; cob(II)yrinate a,c-diamide from sirohydrochlorin (anaerobic route): step 6/10. Functionally, catalyzes the methylation of C-1 in cobalt-precorrin-5B to form cobalt-precorrin-6A. This Polaromonas naphthalenivorans (strain CJ2) protein is Cobalt-precorrin-5B C(1)-methyltransferase.